The sequence spans 227 residues: Large ribosomal subunit protein bL25 (227 aa).

Positions 1–22 (MAETKTLAAAARHGTGKGAARS) are disordered.

The protein belongs to the bacterial ribosomal protein bL25 family. CTC subfamily. Part of the 50S ribosomal subunit; part of the 5S rRNA/L5/L18/L25 subcomplex. Contacts the 5S rRNA. Binds to the 5S rRNA independently of L5 and L18.

In terms of biological role, this is one of the proteins that binds to the 5S RNA in the ribosome where it forms part of the central protuberance. This chain is Large ribosomal subunit protein bL25, found in Methylocella silvestris (strain DSM 15510 / CIP 108128 / LMG 27833 / NCIMB 13906 / BL2).